The chain runs to 329 residues: Phosphate acyltransferase (329 aa).

It belongs to the PlsX family. In terms of assembly, homodimer. Probably interacts with PlsY.

It localises to the cytoplasm. The enzyme catalyses a fatty acyl-[ACP] + phosphate = an acyl phosphate + holo-[ACP]. Its pathway is lipid metabolism; phospholipid metabolism. Its function is as follows. Catalyzes the reversible formation of acyl-phosphate (acyl-PO(4)) from acyl-[acyl-carrier-protein] (acyl-ACP). This enzyme utilizes acyl-ACP as fatty acyl donor, but not acyl-CoA. This is Phosphate acyltransferase from Shouchella clausii (strain KSM-K16) (Alkalihalobacillus clausii).